The following is a 60-amino-acid chain: Metallothionein (60 aa).

Met1 bears the N-acetylmethionine mark. The tract at residues 1–28 (MDPCECSKTGTCNCGGSCTCKNCSCTTC) is beta. Cys4, Cys6, Cys12, Cys14, Cys18, Cys20, Cys23, Cys25, Cys28, Cys32, Cys33, Cys35, Cys36, Cys40, Cys43, Cys47, Cys49, Cys54, Cys58, and Cys59 together coordinate a divalent metal cation. An alpha region spans residues 29 to 60 (TKSCCPCCPSGCPKCASGCVCKGKTCDTTCCQ).

It belongs to the metallothionein superfamily. Type 1 family.

In terms of biological role, metallothioneins have a high content of cysteine residues that bind various heavy metals. This Pseudopleuronectes americanus (Winter flounder) protein is Metallothionein (mt).